The following is a 258-amino-acid chain: Tryptophan synthase alpha chain (258 aa).

Catalysis depends on proton acceptor residues Glu47 and Asp58.

This sequence belongs to the TrpA family. Tetramer of two alpha and two beta chains.

It carries out the reaction (1S,2R)-1-C-(indol-3-yl)glycerol 3-phosphate + L-serine = D-glyceraldehyde 3-phosphate + L-tryptophan + H2O. It functions in the pathway amino-acid biosynthesis; L-tryptophan biosynthesis; L-tryptophan from chorismate: step 5/5. The alpha subunit is responsible for the aldol cleavage of indoleglycerol phosphate to indole and glyceraldehyde 3-phosphate. This Bacillus thuringiensis (strain Al Hakam) protein is Tryptophan synthase alpha chain.